The chain runs to 341 residues: Phenylalanine--tRNA ligase alpha subunit (341 aa).

Position 259 (Glu-259) interacts with Mg(2+).

It belongs to the class-II aminoacyl-tRNA synthetase family. Phe-tRNA synthetase alpha subunit type 1 subfamily. In terms of assembly, tetramer of two alpha and two beta subunits. Mg(2+) serves as cofactor.

It is found in the cytoplasm. The catalysed reaction is tRNA(Phe) + L-phenylalanine + ATP = L-phenylalanyl-tRNA(Phe) + AMP + diphosphate + H(+). The polypeptide is Phenylalanine--tRNA ligase alpha subunit (Mycobacterium tuberculosis (strain ATCC 25177 / H37Ra)).